We begin with the raw amino-acid sequence, 339 residues long: UDP-N-acetylenolpyruvoylglucosamine reductase (339 aa).

Residues 19–189 (VDVQARLFAE…LRVRFKLSRV (171 aa)) form the FAD-binding PCMH-type domain. Arg-166 is an active-site residue. Ser-239 acts as the Proton donor in catalysis. Residue Glu-335 is part of the active site.

The protein belongs to the MurB family. Requires FAD as cofactor.

It is found in the cytoplasm. The enzyme catalyses UDP-N-acetyl-alpha-D-muramate + NADP(+) = UDP-N-acetyl-3-O-(1-carboxyvinyl)-alpha-D-glucosamine + NADPH + H(+). It functions in the pathway cell wall biogenesis; peptidoglycan biosynthesis. Functionally, cell wall formation. This Pseudomonas syringae pv. syringae (strain B728a) protein is UDP-N-acetylenolpyruvoylglucosamine reductase.